We begin with the raw amino-acid sequence, 160 residues long: Serine-protein kinase RsbW (160 aa).

It belongs to the anti-sigma-factor family.

It catalyses the reaction L-seryl-[protein] + ATP = O-phospho-L-seryl-[protein] + ADP + H(+). The enzyme catalyses L-threonyl-[protein] + ATP = O-phospho-L-threonyl-[protein] + ADP + H(+). Negative regulator of sigma-B activity. Phosphorylates and inactivates its specific antagonist protein, RsbV. Upon phosphorylation of RsbV, RsbW is released and binds to sigma-B, thereby blocking its ability to form an RNA polymerase holoenzyme (E-sigma-B). The polypeptide is Serine-protein kinase RsbW (Bacillus licheniformis).